Consider the following 147-residue polypeptide: Hemoglobin subunit gamma (147 aa).

The region spanning 3–147 (HFTAEEKAAI…VANALAYKYH (145 aa)) is the Globin domain. Heme b is bound by residues histidine 64 and histidine 93.

It belongs to the globin family. In terms of assembly, heterotetramer of two alpha chains and two gamma chains in fetal hemoglobin (Hb F). Red blood cells.

In terms of biological role, gamma chains make up the fetal hemoglobin F, in combination with alpha chains. The protein is Hemoglobin subunit gamma (HBG) of Loxodonta africana (African elephant).